Reading from the N-terminus, the 233-residue chain is Protein DOUBLE-STRAND BREAK FORMATION (233 aa).

Interacts with PRD1; this interaction facilitates a binding to PRD3. In terms of tissue distribution, specifically expressed in buds.

Its function is as follows. Required for meiotic double-strand break (DSB) formation, the initial event for meiotic recombination. In Arabidopsis thaliana (Mouse-ear cress), this protein is Protein DOUBLE-STRAND BREAK FORMATION.